The following is a 560-amino-acid chain: Probable sulfate transporter MT1781 (560 aa).

The next 11 membrane-spanning stretches (helical) occupy residues 29-49, 51-71, 79-99, 105-125, 138-158, 184-204, 207-227, 256-276, 333-353, 355-375, and 394-414; these read VLAGLTVAAYLIPQAMAYATV, GLPPAAGLWASIAPLAIYALL, IGPESATALMTAAVLAPMAAG, AVLAATLGLLVGLICLLAGTA, VLVGYMAGIALVMISSQLGTI, WPTFVLAMSVLALLTMLTRWA, APGPIIAVLAATMLVAVMSLD, ALIIPAAGIAIVTFTDGVLTA, LIALGLVVIVMVFASGLLAMF, IAALGALVVYAALRLIDLSEF, and AAVLGLGVFYGVLAAVALSIL. Residues 442-557 form the STAS domain; sequence DYPQAKRVPG…MTLPTAVQAF (116 aa).

It belongs to the SLC26A/SulP transporter (TC 2.A.53) family.

Its subcellular location is the cell membrane. The chain is Probable sulfate transporter MT1781 from Mycobacterium tuberculosis (strain CDC 1551 / Oshkosh).